A 237-amino-acid chain; its full sequence is V-type proton ATPase subunit E (237 aa).

The protein belongs to the V-ATPase E subunit family. V-ATPase is a heteromultimeric enzyme composed of a peripheral catalytic V1 complex (components A to H) attached to an integral membrane V0 proton pore complex (components: a, c, c', c'' and d).

Functionally, subunit of the peripheral V1 complex of vacuolar ATPase essential for assembly or catalytic function. V-ATPase is responsible for acidifying a variety of intracellular compartments in eukaryotic cells. The chain is V-type proton ATPase subunit E (VATE) from Gossypium hirsutum (Upland cotton).